Here is a 1061-residue protein sequence, read N- to C-terminus: Translation initiation factor IF-2 (1061 aa).

Disordered stretches follow at residues 51 to 199 (FARG…VAVK) and 250 to 460 (AFQA…IPTE). Residues 67–77 (NEPKPKIDWSR) show a composition bias toward basic and acidic residues. 5 stretches are compositionally biased toward low complexity: residues 97 to 113 (VAAA…KAPV), 120 to 130 (RPSAPRPAVTA), 167 to 177 (VPQPRQPSAVV), 184 to 199 (TPAI…VAVK), and 250 to 278 (AFQA…AEAP). Positions 279–291 (PVAPEKPAVPAPP) are enriched in pro residues. Over residues 340-360 (SPGGPGGPGGGYGQRPSGPGG) the composition is skewed to gly residues. Over residues 381–391 (GFNNGPRPGFG) the composition is skewed to low complexity. Over residues 392 to 405 (QRPGGFGQRPGMGA) the composition is skewed to gly residues. The region spanning 552–728 (SRPPVVTVMG…CLVADLGNLK (177 aa)) is the tr-type G domain. Residues 561 to 568 (GHVDHGKT) are G1. Residue 561 to 568 (GHVDHGKT) participates in GTP binding. Residues 586-590 (GITQH) form a G2 region. The tract at residues 614-617 (DTPG) is G3. Residues 614–618 (DTPGH) and 668–671 (NKID) each bind GTP. Residues 668 to 671 (NKID) form a G4 region. The interval 704 to 706 (SAK) is G5.

This sequence belongs to the TRAFAC class translation factor GTPase superfamily. Classic translation factor GTPase family. IF-2 subfamily.

It localises to the cytoplasm. Functionally, one of the essential components for the initiation of protein synthesis. Protects formylmethionyl-tRNA from spontaneous hydrolysis and promotes its binding to the 30S ribosomal subunits. Also involved in the hydrolysis of GTP during the formation of the 70S ribosomal complex. In Acidobacterium capsulatum (strain ATCC 51196 / DSM 11244 / BCRC 80197 / JCM 7670 / NBRC 15755 / NCIMB 13165 / 161), this protein is Translation initiation factor IF-2.